The following is a 1244-amino-acid chain: ATP-dependent RNA helicase DHX8 (1244 aa).

A Glycyl lysine isopeptide (Lys-Gly) (interchain with G-Cter in SUMO2) cross-link involves residue lysine 140. Disordered stretches follow at residues 152–289 and 361–396; these read LMPS…PAIG and DVDQETGEDLNPNRRRNLVGETNEETSMRNPDRPTH. The span at 160–169 shows a compositional bias: basic and acidic residues; sequence EKQRDPEHRD. The span at 170–179 shows a compositional bias: basic residues; that stretch reads RTKKKKRSRS. Positions 180–220 are enriched in basic and acidic residues; sequence RDRDRDRDRDRDRDRDRDRDRDKDRERDRDRERDRERDRER. Positions 221–234 are enriched in basic residues; the sequence is DHKRRHRSRSRSHS. Over residues 256–283 the composition is skewed to basic and acidic residues; the sequence is FKDRKDREKYGERNLDRWRDKHVDRPPP. Residues 289-360 form the S1 motif domain; it reads GDIYNGKVTS…TGTKTSLSMK (72 aa). Residues 386-395 are compositionally biased toward basic and acidic residues; it reads TSMRNPDRPT. Serine 419 is modified (phosphoserine). A Glycyl lysine isopeptide (Lys-Gly) (interchain with G-Cter in SUMO2) cross-link involves residue lysine 423. The residue at position 484 (serine 484) is a Phosphoserine. The Helicase ATP-binding domain maps to 599 to 762; it reads VQAVHDNQIL…FYEAPIFTIP (164 aa). 612–619 lines the ATP pocket; sequence GETGSGKT. Positions 709-712 match the DEAH box motif; sequence DEAH. A Helicase C-terminal domain is found at 780–960; that stretch reads YLDASLITVM…STVLSLKAMG (181 aa).

Belongs to the DEAD box helicase family. DEAH subfamily. DDX8/PRP22 sub-subfamily. In terms of assembly, identified in the spliceosome C complex. Interacts with ARRB2; the interaction is detected in the nucleus upon OR1D2 stimulation. Interacts with SRRM2. Interacts with CACTIN.

Its subcellular location is the nucleus. It carries out the reaction ATP + H2O = ADP + phosphate + H(+). In terms of biological role, involved in pre-mRNA splicing as component of the spliceosome. Facilitates nuclear export of spliced mRNA by releasing the RNA from the spliceosome. The polypeptide is ATP-dependent RNA helicase DHX8 (Dhx8) (Mus musculus (Mouse)).